The following is a 362-amino-acid chain: Oryzain gamma chain (362 aa).

Positions 1–24 (MAHRRIILLLAAAAVAATSAVAAA) are cleaved as a signal peptide. Positions 25-144 (SSGFDDSNPI…GNHRMRDAAA (120 aa)) are cleaved as a propeptide — activation peptide. Asn128 carries N-linked (GlcNAc...) asparagine glycosylation. 2 cysteine pairs are disulfide-bonded: Cys166/Cys209 and Cys200/Cys242. Residue Cys169 is part of the active site. N-linked (GlcNAc...) asparagine glycosylation occurs at Asn258. Residues Cys300 and Cys350 are joined by a disulfide bond. Catalysis depends on residues His309 and Asn329.

The protein belongs to the peptidase C1 family. Expressed only in seeds.

This Oryza sativa subsp. japonica (Rice) protein is Oryzain gamma chain.